The following is a 349-amino-acid chain: Phosphate acyltransferase (349 aa).

The protein belongs to the PlsX family. Homodimer. Probably interacts with PlsY.

Its subcellular location is the cytoplasm. It carries out the reaction a fatty acyl-[ACP] + phosphate = an acyl phosphate + holo-[ACP]. It participates in lipid metabolism; phospholipid metabolism. Functionally, catalyzes the reversible formation of acyl-phosphate (acyl-PO(4)) from acyl-[acyl-carrier-protein] (acyl-ACP). This enzyme utilizes acyl-ACP as fatty acyl donor, but not acyl-CoA. In Rhodospirillum rubrum (strain ATCC 11170 / ATH 1.1.1 / DSM 467 / LMG 4362 / NCIMB 8255 / S1), this protein is Phosphate acyltransferase.